The chain runs to 30 residues: Photosystem I reaction center subunit XII (30 aa).

A helical transmembrane segment spans residues 7–29 (VYIALMAALLASVLAIRLGATLY).

The protein belongs to the PsaM family.

The protein resides in the plastid. Its subcellular location is the chloroplast thylakoid membrane. The polypeptide is Photosystem I reaction center subunit XII (Thalassiosira pseudonana (Marine diatom)).